Here is a 196-residue protein sequence, read N- to C-terminus: Imidazoleglycerol-phosphate dehydratase (196 aa).

Belongs to the imidazoleglycerol-phosphate dehydratase family.

The protein localises to the cytoplasm. It carries out the reaction D-erythro-1-(imidazol-4-yl)glycerol 3-phosphate = 3-(imidazol-4-yl)-2-oxopropyl phosphate + H2O. It participates in amino-acid biosynthesis; L-histidine biosynthesis; L-histidine from 5-phospho-alpha-D-ribose 1-diphosphate: step 6/9. This chain is Imidazoleglycerol-phosphate dehydratase, found in Caulobacter sp. (strain K31).